We begin with the raw amino-acid sequence, 312 residues long: Salivary protein SG34 (312 aa).

Positions 1 to 20 (MSPSKKILVLLLFPILLVSS) are cleaved as a signal peptide. Residues 95-158 (NMEVQLLRES…QEEIEEQTKQ (64 aa)) are a coiled coil.

The protein belongs to the salivary protein SG34 family. Female salivary gland (at protein level). Low-level expression in ovary.

Functionally, possible serine protease. In terms of biological role, (Microbial infection) Modulates replication of duck Tembusu virus in salivary glands and virus release into the saliva, probably via the regulation of antimicrobial peptides expression in response to virus infection. Its function is as follows. (Microbial infection) Enhances replication of dengue virus type 2 in human keratinocytes, probably by suppressing the production of type I interferons and antimicrobial peptides in response to virus infection. This Aedes aegypti (Yellowfever mosquito) protein is Salivary protein SG34.